The primary structure comprises 206 residues: dITP/XTP pyrophosphatase (206 aa).

7-12 is a substrate binding site; sequence SNNAKK. The Proton acceptor role is filled by aspartate 72. A Mg(2+)-binding site is contributed by aspartate 72. Substrate contacts are provided by residues serine 73, 155 to 158, lysine 182, and 187 to 188; these read FGYD and HR.

Belongs to the HAM1 NTPase family. In terms of assembly, homodimer. Mg(2+) serves as cofactor.

It carries out the reaction XTP + H2O = XMP + diphosphate + H(+). It catalyses the reaction dITP + H2O = dIMP + diphosphate + H(+). The enzyme catalyses ITP + H2O = IMP + diphosphate + H(+). Pyrophosphatase that catalyzes the hydrolysis of nucleoside triphosphates to their monophosphate derivatives, with a high preference for the non-canonical purine nucleotides XTP (xanthosine triphosphate), dITP (deoxyinosine triphosphate) and ITP. Seems to function as a house-cleaning enzyme that removes non-canonical purine nucleotides from the nucleotide pool, thus preventing their incorporation into DNA/RNA and avoiding chromosomal lesions. This is dITP/XTP pyrophosphatase from Corynebacterium glutamicum (strain ATCC 13032 / DSM 20300 / JCM 1318 / BCRC 11384 / CCUG 27702 / LMG 3730 / NBRC 12168 / NCIMB 10025 / NRRL B-2784 / 534).